A 117-amino-acid polypeptide reads, in one-letter code: MAIKKTYRVKRSKDFDQIFSAKHSFANKRFVVYKLNTNQPHFRVGLSVSKKLGHAVLRNRIKRLLRHAVAEFKPYLVDEDFVIIARSGVETLSFEEVKKNLRHVLKLSKIYVDGEND.

The protein belongs to the RnpA family. In terms of assembly, consists of a catalytic RNA component (M1 or rnpB) and a protein subunit.

The catalysed reaction is Endonucleolytic cleavage of RNA, removing 5'-extranucleotides from tRNA precursor.. Its function is as follows. RNaseP catalyzes the removal of the 5'-leader sequence from pre-tRNA to produce the mature 5'-terminus. It can also cleave other RNA substrates such as 4.5S RNA. The protein component plays an auxiliary but essential role in vivo by binding to the 5'-leader sequence and broadening the substrate specificity of the ribozyme. The sequence is that of Ribonuclease P protein component from Lactococcus lactis subsp. cremoris (strain MG1363).